Here is a 92-residue protein sequence, read N- to C-terminus: Small ribosomal subunit protein uS19c (92 aa).

The protein belongs to the universal ribosomal protein uS19 family.

The protein localises to the plastid. It is found in the chloroplast. Its function is as follows. Protein S19 forms a complex with S13 that binds strongly to the 16S ribosomal RNA. The protein is Small ribosomal subunit protein uS19c of Calycanthus floridus var. glaucus (Eastern sweetshrub).